The sequence spans 273 residues: Glutamate 5-kinase (273 aa).

Lysine 15 provides a ligand contact to ATP. Serine 55, aspartate 142, and asparagine 158 together coordinate substrate. Residues 178 to 179 (SD) and 220 to 226 (TGGMLSK) each bind ATP.

The protein belongs to the glutamate 5-kinase family.

The protein resides in the cytoplasm. The catalysed reaction is L-glutamate + ATP = L-glutamyl 5-phosphate + ADP. It participates in amino-acid biosynthesis; L-proline biosynthesis; L-glutamate 5-semialdehyde from L-glutamate: step 1/2. Functionally, catalyzes the transfer of a phosphate group to glutamate to form L-glutamate 5-phosphate. This Streptococcus pyogenes serotype M4 (strain MGAS10750) protein is Glutamate 5-kinase.